Reading from the N-terminus, the 208-residue chain is FAS-associated death domain protein (208 aa).

In terms of domain architecture, DED spans 3 to 81 (PFLVLLHSVS…RHDLLRRVDD (79 aa)). A Death domain is found at 97-181 (LCAAFNVICD…LVADLVQEVQ (85 aa)). Arginine 117 carries (Microbial infection) N-beta-linked (GlcNAc) arginine glycosylation. The segment at 187–208 (QNRSGAMSPMSWNSDASTSEAS) is disordered. Serine 194 bears the Phosphoserine mark.

In terms of assembly, can self-associate. Component of the AIM2 PANoptosome complex, a multiprotein complex that drives inflammatory cell death (PANoptosis). Component of the death-induced signaling complex (DISC) composed of cell surface receptor FAS/CD95 or TNFRSF1A, adapter protein FADD and the CASP8 protease; recruitment of CASP8 to the complex is required for processing of CASP8 into the p18 and p10 subunits. Interacts (via death domain) with FAS (via death domain). Interacts directly (via DED domain) with NOL3 (via CARD domain); inhibits death-inducing signaling complex (DISC) assembly by inhibiting the increase in FAS-FADD binding induced by FAS activation. Interacts with CFLAR, PEA15 and MBD4. When phosphorylated, part of a complex containing HIPK3 and FAS. May interact with MAVS/IPS1. Interacts with MOCV v-CFLAR protein and PIDD1. Interacts with RIPK1 and TRADD. Interacts with stimulated TNFRSF10B. Interacts with DDX24. (Microbial infection) Interacts with human papillomavirus 16/HPV16 protein E6. As to quaternary structure, (Microbial infection) Interacts with molluscum contagiosum virus proteins MC159L/v-CFLAR and MC160L. (Microbial infection) Glycosylated at Arg-117 by enteropathogenic E.coli protein NleB1, C.rodentium protein NleB and S.typhimurium protein Ssek1: arginine GlcNAcylation prevents recruitment of caspase-8 or caspase-10 to the activated Fas (CD95) or TNFR-1 receptors. As to expression, expressed in a wide variety of tissues, except for peripheral blood mononuclear leukocytes.

It localises to the cytoplasm. Apoptotic adapter molecule that recruits caspases CASP8 or CASP10 to the activated FAS/CD95 or TNFRSF1A/TNFR-1 receptors. The resulting aggregate called the death-inducing signaling complex (DISC) performs CASP8 proteolytic activation. Active CASP8 initiates the subsequent cascade of caspases mediating apoptosis. Involved in interferon-mediated antiviral immune response, playing a role in the positive regulation of interferon signaling. The sequence is that of FAS-associated death domain protein from Homo sapiens (Human).